A 343-amino-acid chain; its full sequence is DNA repair and recombination protein RadA (343 aa).

Residue 107–114 (GEFGAGKS) coordinates ATP.

This sequence belongs to the eukaryotic RecA-like protein family.

Involved in DNA repair and in homologous recombination. Binds and assemble on single-stranded DNA to form a nucleoprotein filament. Hydrolyzes ATP in a ssDNA-dependent manner and promotes DNA strand exchange between homologous DNA molecules. The polypeptide is DNA repair and recombination protein RadA (Haloquadratum walsbyi (strain DSM 16790 / HBSQ001)).